The chain runs to 728 residues: Putative auxin response factor 20 (728 aa).

Positions Phe119–Pro233 form a DNA-binding region, TF-B3 1. Composition is skewed to low complexity over residues Pro665 to Ala689 and Ala700 to Ser712. The segment at Pro665–Gly728 is disordered.

It belongs to the ARF family. Homo and heterodimers.

The protein localises to the nucleus. Its function is as follows. Auxin response factors (ARFs) are transcriptional factors that bind specifically to the DNA sequence 5'-TGTCTC-3' found in the auxin-responsive promoter elements (AuxREs). The chain is Putative auxin response factor 20 (ARF20) from Oryza sativa subsp. japonica (Rice).